The following is a 730-amino-acid chain: Actin filament-associated protein 1 (730 aa).

Position 1 is an N-acetylmethionine (M1). The interval K47–E91 is disordered. Residues P60–P85 show a composition bias toward pro residues. Positions P71–W74 match the SH3-binding motif. Positions Y94 to A97 match the SH2-binding 1 motif. Positions S119–Q140 are disordered. Residues D153–S249 enclose the PH 1 domain. The segment at S252–G292 is disordered. The segment covering H268 to S283 has biased composition (basic and acidic residues). Phosphoserine occurs at positions 282 and 283. Residues D347 to G441 form the PH 2 domain. An SH2-binding 2 motif is present at residues Y451–V456. The tract at residues K512–A537 is disordered. S548 carries the post-translational modification Phosphoserine. Residues K557 to A648 are a coiled coil. Residues D594–T637 form an interaction with F-actin region. 3 positions are modified to phosphoserine: S664, S665, and S668. Residue T675 is modified to Phosphothreonine. Phosphoserine occurs at positions 679 and 687.

In terms of assembly, monomer and homomultimer. Interacts via its C-terminus with F-actin; probably involving AFAP1 multimers. Interacts with activated SRC SH3-SH2 domains. Interacts via its PH 1 domain with PRKCA, PRKCB and PRKCI. In terms of processing, phosphorylated on tyrosine residues by SRC. In terms of tissue distribution, low expression in normal breast epithelial cell line MCF-10A and in tumorigenic breast cancer cell lines MCF-7, T-47D and ZR-75-1. Highly expressed in the invasive breast cancer cell lines MDA-MB-231 and MDA-MB-435. Overexpressed in prostate carcinoma.

The protein resides in the cytoplasm. It is found in the cytoskeleton. It localises to the stress fiber. Functionally, can cross-link actin filaments into both network and bundle structures. May modulate changes in actin filament integrity and induce lamellipodia formation. May function as an adapter molecule that links other proteins, such as SRC and PKC to the actin cytoskeleton. Seems to play a role in the development and progression of prostate adenocarcinoma by regulating cell-matrix adhesions and migration in the cancer cells. The protein is Actin filament-associated protein 1 (AFAP1) of Homo sapiens (Human).